Reading from the N-terminus, the 463-residue chain is Cytochrome c-552 (463 aa).

The first 23 residues, Met1 to Ala23, serve as a signal peptide directing secretion. His83 serves as a coordination point for heme c. 3 residues coordinate heme: Cys111, Cys114, and Lys115. Cys149, Cys152, His153, Cys191, Cys194, and His195 together coordinate heme c. Glu197, Tyr198, Lys246, and Gln248 together coordinate Ca(2+). Residue Tyr198 participates in substrate binding. His249 contributes to the substrate binding site. Positions 260, 267, 270, 271, 286, 299, 302, 303, and 378 each coordinate heme c.

This sequence belongs to the cytochrome c-552 family. It depends on Ca(2+) as a cofactor. Heme c serves as cofactor.

It is found in the periplasm. The catalysed reaction is 6 Fe(III)-[cytochrome c] + NH4(+) + 2 H2O = 6 Fe(II)-[cytochrome c] + nitrite + 8 H(+). It participates in nitrogen metabolism; nitrate reduction (assimilation). Catalyzes the reduction of nitrite to ammonia, consuming six electrons in the process. In Shewanella frigidimarina (strain NCIMB 400), this protein is Cytochrome c-552.